The primary structure comprises 308 residues: UPF0282 protein PYRAB09800 (308 aa).

This sequence belongs to the UPF0282 family.

The sequence is that of UPF0282 protein PYRAB09800 from Pyrococcus abyssi (strain GE5 / Orsay).